The primary structure comprises 263 residues: Probable HTH-type transcriptional regulator ArcR (263 aa).

An HTH iclR-type domain is found at 14-74; the sequence is ITSVLNAVEI…DGDGTYQLGD (61 aa). The segment at residues 35–54 is a DNA-binding region (H-T-H motif); that stretch reads LQELTTELDLTKATIHTYMA. The IclR-ED domain maps to 89 to 262; the sequence is LYRLGREEID…ANIIEVRLET (174 aa).

Functionally, probably regulates transcription of the arcABC operon. In Halobacterium salinarum (strain ATCC 29341 / DSM 671 / R1), this protein is Probable HTH-type transcriptional regulator ArcR (arcR).